Here is a 337-residue protein sequence, read N- to C-terminus: Glucokinase (337 aa).

Residue 11–16 (ADIGGT) coordinates ATP.

The protein belongs to the bacterial glucokinase family.

It localises to the cytoplasm. It carries out the reaction D-glucose + ATP = D-glucose 6-phosphate + ADP + H(+). The protein is Glucokinase of Xylella fastidiosa (strain 9a5c).